Here is a 451-residue protein sequence, read N- to C-terminus: Tubulin beta-4 chain (451 aa).

Residues Gln11, Glu69, Ser138, Gly142, Thr143, Gly144, Asn204, and Asn226 each contribute to the GTP site. Glu69 provides a ligand contact to Mg(2+). Residues 417–427 are compositionally biased toward polar residues; the sequence is DLVSEYQQYQD. Positions 417–451 are disordered; the sequence is DLVSEYQQYQDATAEEEGEYDEDDGGYGDEDDGMM. Residues 429 to 451 show a composition bias toward acidic residues; sequence TAEEEGEYDEDDGGYGDEDDGMM.

The protein belongs to the tubulin family. Dimer of alpha and beta chains. A typical microtubule is a hollow water-filled tube with an outer diameter of 25 nm and an inner diameter of 15 nM. Alpha-beta heterodimers associate head-to-tail to form protofilaments running lengthwise along the microtubule wall with the beta-tubulin subunit facing the microtubule plus end conferring a structural polarity. Microtubules usually have 13 protofilaments but different protofilament numbers can be found in some organisms and specialized cells. It depends on Mg(2+) as a cofactor.

The protein localises to the cytoplasm. The protein resides in the cytoskeleton. Its function is as follows. Tubulin is the major constituent of microtubules, a cylinder consisting of laterally associated linear protofilaments composed of alpha- and beta-tubulin heterodimers. Microtubules grow by the addition of GTP-tubulin dimers to the microtubule end, where a stabilizing cap forms. Below the cap, tubulin dimers are in GDP-bound state, owing to GTPase activity of alpha-tubulin. The sequence is that of Tubulin beta-4 chain (TUBB4) from Oomycete-like sp. (strain MacKay2000).